Consider the following 166-residue polypeptide: Spiderine-1b (166 aa).

The signal sequence occupies residues 1–18 (MKFALVLLGICAFYLVNA). A propeptide spans 19 to 58 (TGDLETELEASELQELQEALDLIGETSLESLEAEELEEAR) (removed in mature form). A linear cationic cytotoxin domain region spans residues 59–99 (KFKWGKLFSAAKKLYKKGKKLSKNKNFKKALKFGKQLAKNL). Positions 113–166 (NNKCWAIGTTCSDDCDCCPEHHCHCPAGKWLPGLFRCTCQVTESDKVNKCPPAE) constitute an Oxytoxin-type inhibitor cystine knot (ICK) domain. 5 disulfides stabilise this stretch: C116-C130, C123-C135, C127-C162, C129-C151, and C137-C149.

Belongs to the spiderine family. Cationic/spiderine subfamily. As to expression, expressed by the venom gland.

It localises to the secreted. Has antimicrobial, insecticidal, cytolytic and cytotoxic activity. The sequence is that of Spiderine-1b from Oxyopes takobius (Lynx spider).